Here is a 197-residue protein sequence, read N- to C-terminus: Large ribosomal subunit protein bL9c (197 aa).

The transit peptide at 1 to 42 (MASSTALSLSWSSSPCWSHSFNGGANETLKVSERRFNFEVVS) directs the protein to the chloroplast.

The protein belongs to the bacterial ribosomal protein bL9 family. In terms of assembly, part of the 50S ribosomal subunit.

It localises to the plastid. Its subcellular location is the chloroplast. Binds to the 23S rRNA. The sequence is that of Large ribosomal subunit protein bL9c (RPL9) from Arabidopsis thaliana (Mouse-ear cress).